The primary structure comprises 598 residues: Aspartate--tRNA(Asp/Asn) ligase (598 aa).

Glu175 contacts L-aspartate. The aspartate stretch occupies residues 199–202 (QQFK). Residues Arg221 and His452 each contribute to the L-aspartate site. 221–223 (RDE) provides a ligand contact to ATP. An ATP-binding site is contributed by Glu486. Residue Arg493 participates in L-aspartate binding. Position 538 to 541 (538 to 541 (GVDR)) interacts with ATP.

The protein belongs to the class-II aminoacyl-tRNA synthetase family. Type 1 subfamily. As to quaternary structure, homodimer.

The protein resides in the cytoplasm. It carries out the reaction tRNA(Asx) + L-aspartate + ATP = L-aspartyl-tRNA(Asx) + AMP + diphosphate. Functionally, aspartyl-tRNA synthetase with relaxed tRNA specificity since it is able to aspartylate not only its cognate tRNA(Asp) but also tRNA(Asn). Reaction proceeds in two steps: L-aspartate is first activated by ATP to form Asp-AMP and then transferred to the acceptor end of tRNA(Asp/Asn). This chain is Aspartate--tRNA(Asp/Asn) ligase, found in Gluconobacter oxydans (strain 621H) (Gluconobacter suboxydans).